The sequence spans 1101 residues: MKSRQKGKKKGSAKERVFGCDLQEHLQHSGQEVPQVLKSCAEFVEEYGVVDGIYRLSGVSSNIQKLRQEFESERKPDLRRDVYLQDIHCVSSLCKAYFRELPDPLLTYRLYDKFAEAVGVQLEPERLVKILEVLRELPVPNYRTLEFLMRHLVHMASFSAQTNMHARNLAIVWAPNLLRSKDIEASGFNGTAAFMEVRVQSIVVEFILTHVDQLFGGAALSGGEVESGWRSLPGTRASGSPEDLMPRPLPYHLPSILQAGDGPPQMRPYHTIIEIAEHKRKGSLKVRKWRSIFNLGRSGHETKRKLPRGAEDREDKSNKGTLRPAKSMDSLSAAAGASDEPEGLVGPSSPRPSPLLPESLENDSIEAAEGEQEPEAEALGGTNSEPGTPRAGRSAIRAGGSSRAERCAGVHISDPYNVNLPLHITSILSVPPNIISNVSLARLTRGLECPALQHRPSPASGPGPGPGLGPGPPDEKLEASPASSPLADSGPDDLAPALEDSLSQEVQDSFSFLEDSSSSEPEWVGAEDGEVAQAEAAGAAFSPGEDDPGMGYLEELLGVGPQVEEFSVEPPLDDLSLDEAQFVLAPSCCSLDSAGPRPEVEEENGEEVFLSAYDDLSPLLGPKPPIWKGSGSLEGEAAGCGRQALGQGGEEQACWEVGEDKQAEPGGRLDIREEAEGSPETKVEAGKASEDRGEAGGSQETKVRLREGSREETEAKEEKSKGQKKADSMEAKGVEEPGGDEYTDEKEKEIEREEDEQREEAQVEAGRDLEQGAQEDQVAEEKWEVVQKQEAEGVREDEDKGQREKGYHEARKDQGDGEDSRSPEAATEGGAGEVSKERESGDGEAEGDQRAGGYYLEEDTLSEGSGVASLEVDCAKEGNPHSSEMEEVAPQPPQPEEMEPEGQPSPDGCLCPCSLGLGGVGMRLASTLVQVQQVRSVPVVPPKPQFAKMPSAMCSKIHVAPANPCPRPGRLDGTPGERAWGSRASRSSWRNGGSLSFDAAVALARDRQRTEAQGVRRTQTCTEGGDYCLIPRTSPCSMISAHSPRPLSCLELPSEGAEGSGSRSRLSLPPREPQVPDPLLSSQRRSYAFETQANPGKGEGL.

The 196-residue stretch at 20-215 (CDLQEHLQHS…FILTHVDQLF (196 aa)) folds into the Rho-GAP domain. 3 disordered regions span residues 224 to 243 (EVES…SPED), 300 to 400 (HETK…RAGG), and 451 to 529 (ALQH…AEDG). Over residues 308–318 (RGAEDREDKSN) the composition is skewed to basic and acidic residues. Residues 360–376 (LENDSIEAAEGEQEPEA) are compositionally biased toward acidic residues. Pro residues predominate over residues 459–472 (ASGPGPGPGLGPGP). Residues 508–520 (DSFSFLEDSSSSE) are compositionally biased toward low complexity. Position 576 is a phosphoserine (serine 576). Disordered stretches follow at residues 621-906 (GPKP…QPSP) and 965-991 (CPRP…SWRN). 4 stretches are compositionally biased toward basic and acidic residues: residues 658–694 (GEDK…DRGE), 701–735 (TKVR…KGVE), 759–770 (EEAQVEAGRDLE), and 779–822 (AEEK…DSRS). The segment covering 976-991 (GERAWGSRASRSSWRN) has biased composition (low complexity). Serine 996 carries the phosphoserine modification. The tract at residues 1050–1101 (LELPSEGAEGSGSRSRLSLPPREPQVPDPLLSSQRRSYAFETQANPGKGEGL) is disordered. Residues 1053-1069 (PSEGAEGSGSRSRLSLP) show a composition bias toward low complexity. Over residues 1080–1094 (LSSQRRSYAFETQAN) the composition is skewed to polar residues.

As to quaternary structure, interacts with RHOU in a GTP-independent manner.

The protein localises to the cytoplasmic vesicle. Its function is as follows. GTPase-activating protein (GAP) for RAC1 and RHOA, but not for CDC42. The polypeptide is Rho GTPase-activating protein 30 (ARHGAP30) (Homo sapiens (Human)).